The sequence spans 161 residues: Type IV major fimbrial protein FimA (161 aa).

Positions 1 to 7 (MKSLQKG) are cleaved as a propeptide — leader sequence. Phe-8 bears the N-methylphenylalanine mark. The chain crosses the membrane as a helical span at residues 8–28 (FTLIELMIVVAIIGILAAFAI). Cys-63 and Cys-105 are oxidised to a cystine.

It belongs to the N-Me-Phe pilin family. In terms of assembly, the pili are polar flexible filaments of about 5.4 nanometers diameter and 2.5 micrometers average length; they consist of only a single polypeptide chain arranged in a helical configuration of five subunits per turn in the assembled pilus.

The protein resides in the fimbrium. It is found in the membrane. Its function is as follows. Major component of the type IV fimbriae that plays an essential role in twitching motility, natural transformation, and protease secretion. The chain is Type IV major fimbrial protein FimA (fimA) from Dichelobacter nodosus (Bacteroides nodosus).